Here is a 102-residue protein sequence, read N- to C-terminus: Large ribosomal subunit protein uL24c (102 aa).

Belongs to the universal ribosomal protein uL24 family. Part of the 50S ribosomal subunit.

It is found in the plastid. It localises to the chloroplast. Its function is as follows. One of two assembly initiator proteins, it binds directly to the 5'-end of the 23S rRNA, where it nucleates assembly of the 50S subunit. This is Large ribosomal subunit protein uL24c (rpl24) from Rhodomonas salina (Cryptomonas salina).